The primary structure comprises 153 residues: Aspartate carbamoyltransferase regulatory chain (153 aa).

Positions 109, 114, 135, and 138 each coordinate Zn(2+).

The protein belongs to the PyrI family. In terms of assembly, contains catalytic and regulatory chains. Zn(2+) is required as a cofactor.

In terms of biological role, involved in allosteric regulation of aspartate carbamoyltransferase. The polypeptide is Aspartate carbamoyltransferase regulatory chain (Natronomonas pharaonis (strain ATCC 35678 / DSM 2160 / CIP 103997 / JCM 8858 / NBRC 14720 / NCIMB 2260 / Gabara) (Halobacterium pharaonis)).